The sequence spans 843 residues: Glycogen phosphorylase, muscle form (843 aa).

Position 2 is an N-acetylserine (serine 2). Serine 15 is modified (phosphoserine; by PHK; in form phosphorylase A). The AMP site is built by aspartate 43 and tyrosine 76. Residues tyrosine 204 and tyrosine 227 each carry the phosphotyrosine modification. 310 to 319 lines the AMP pocket; sequence RRFKSSKFGC. Phosphoserine is present on serine 430. Tyrosine 473 carries the phosphotyrosine modification. A Phosphoserine modification is found at serine 514. Lysine 681 carries the N6-(pyridoxal phosphate)lysine modification. Phosphoserine occurs at positions 747 and 748.

Belongs to the glycogen phosphorylase family. In terms of assembly, homodimer. Homotetramer; to form the enzymatically active phosphorylase A. The cofactor is pyridoxal 5'-phosphate. In terms of processing, phosphorylation of Ser-15 converts phosphorylase B (unphosphorylated) to phosphorylase A.

It carries out the reaction [(1-&gt;4)-alpha-D-glucosyl](n) + phosphate = [(1-&gt;4)-alpha-D-glucosyl](n-1) + alpha-D-glucose 1-phosphate. Its activity is regulated as follows. Allosterically regulated through the non-covalent binding of metabolites, being activated by AMP and inhibited by ATP, ADP, and glucose-6-phosphate. The activity is also controlled by post-translational modifications including phosphorylation. Functionally, allosteric enzyme that catalyzes the rate-limiting step in glycogen catabolism, the phosphorolytic cleavage of glycogen to produce glucose-1-phosphate, and plays a central role in maintaining cellular and organismal glucose homeostasis. The polypeptide is Glycogen phosphorylase, muscle form (Oryctolagus cuniculus (Rabbit)).